A 500-amino-acid polypeptide reads, in one-letter code: Aromatic-L-amino-acid decarboxylase (500 aa).

Pro102 is an L-tryptophan binding site. Ser168 is a pyridoxal 5'-phosphate binding site. Residue His203 participates in L-tryptophan binding. Thr262 contacts pyridoxal 5'-phosphate. Position 318 (His318) interacts with L-tryptophan. At Lys319 the chain carries N6-(pyridoxal phosphate)lysine. Tyr348 serves as a coordination point for L-tryptophan.

The protein belongs to the group II decarboxylase family. As to quaternary structure, homodimer. It depends on pyridoxal 5'-phosphate as a cofactor.

The enzyme catalyses L-tryptophan + H(+) = tryptamine + CO2. It catalyses the reaction 5-hydroxy-L-tryptophan + H(+) = serotonin + CO2. Functionally, catalyzes the decarboxylation of L-tryptophan to tryptamine and L-5-hydroxytryptophan to serotonin, respectively. The protein is Aromatic-L-amino-acid decarboxylase of Catharanthus roseus (Madagascar periwinkle).